The primary structure comprises 290 residues: MKVINQTLLEKVIIERSRSSHKGDYGRLLLLGGTYPYGGAIIMAALAAVKNGAGLVTVGTDRENIPALHSHLPEAMAFALQDKQLLKEQLEKAEVVLLGPGLGDNAFGEDLVKQVFAGLKQNQILIVDGGALTILARTSLSFPSSQLILTPHQKEWEKLSGITIEKQKEDTTASALTSFPKGTILVEKGPATRVWQAGQSDYYQLQVGGPYQATGGMGDTLAGMIAGFVGQFRQASLYERVAVATHLHSAIAQELSQENYVVLPTEISRYLPKIMKIICQQERVSKDKLV.

The 274-residue stretch at 5 to 278 (NQTLLEKVII…RYLPKIMKII (274 aa)) folds into the YjeF C-terminal domain. 3 residues coordinate (6S)-NADPHX: Ala40, Gly103, and His152. Gly218 contacts AMP. Asp219 contacts (6S)-NADPHX.

This sequence belongs to the NnrD/CARKD family. In terms of assembly, homotetramer. Mg(2+) serves as cofactor.

It carries out the reaction (6S)-NADHX + ADP = AMP + phosphate + NADH + H(+). The catalysed reaction is (6S)-NADPHX + ADP = AMP + phosphate + NADPH + H(+). Functionally, catalyzes the dehydration of the S-form of NAD(P)HX at the expense of ADP, which is converted to AMP. Together with NAD(P)HX epimerase, which catalyzes the epimerization of the S- and R-forms, the enzyme allows the repair of both epimers of NAD(P)HX, a damaged form of NAD(P)H that is a result of enzymatic or heat-dependent hydration. This Streptococcus pneumoniae (strain ATCC BAA-255 / R6) protein is ADP-dependent (S)-NAD(P)H-hydrate dehydratase.